A 598-amino-acid polypeptide reads, in one-letter code: MSPEALQELIFTIANNLVSEGKAGTLTAEELPDSAKFAVMRPKDRAHGDWASNAAMQLAKKAGMKPRDLAQLFADALNGTDGIAAVEVAGPGFINITLDSASAAAVVDQVLDEGNRFGKNNHLSGKTLNLEFVSANPTGPIHIGGTRWAAVGDSMARILQANGATVVREYYFNDHGEQINRFAKSLVAAAHDEPTPVDGYKGAYIDEIARRVIVEANAEGIDILNLPRVDGGTDEKGEPLGEGDSEQREEFRKRAVPMMFDEIRQSMKEFRVHFDVWFHENSLYEDGEVEKAIADLRNAGDIYEKDGATWFESTEHGDDKDRVIIKSDGTYAYFAADIAYYRNKRHRKTDPADVAIYMLGADHHGYIGRMMAMCAAFGDKPGENMQILIGQMVNVMKDGKPVRMSKRAGNIVTIDDLIDAIGVDASRYSLARTDYNSPVDIDLNLLASHSNDNPVYYVQYAHARSCNVDRNAEAAQINAADADLSLLDTEADGEVIAALAQWPALLTLAGDLRAPHRIAHYLEDLAAAYHKWYNVERVVPMPLTEAEERADEQTRERTRIAKNPEPARAAARLKLNDAVQTVIAEGLDLLGVTAPDKM.

Residues 135–145 carry the 'HIGH' region motif; the sequence is ANPTGPIHIGG. A disordered region spans residues 229–248; the sequence is VDGGTDEKGEPLGEGDSEQR. Basic and acidic residues predominate over residues 231–248; that stretch reads GGTDEKGEPLGEGDSEQR.

The protein belongs to the class-I aminoacyl-tRNA synthetase family. As to quaternary structure, monomer.

It is found in the cytoplasm. The catalysed reaction is tRNA(Arg) + L-arginine + ATP = L-arginyl-tRNA(Arg) + AMP + diphosphate. The protein is Arginine--tRNA ligase of Bifidobacterium animalis subsp. lactis (strain AD011).